We begin with the raw amino-acid sequence, 606 residues long: Albumin A (606 aa).

A signal peptide spans 1 to 18 (MKWITLICLLISSTLIES). A propeptide spanning residues 19-24 (RIIFKR) is cleaved from the precursor. 3 consecutive Albumin domains span residues 22-211 (FKRD…ELMK), 212-401 (HSHS…RFMN), and 402-599 (EAKE…VLIE). Residue H30 participates in Cu cation binding. 17 disulfides stabilise this stretch: C80-C89, C102-C118, C117-C128, C148-C193, C192-C201, C224-C270, C269-C277, C289-C303, C302-C313, C340-C383, C382-C391, C414-C460, C459-C470, C483-C499, C498-C509, C536-C581, and C580-C589.

The protein belongs to the ALB/AFP/VDB family. Plasma.

Its subcellular location is the secreted. Functionally, binds water, Ca(2+), Na(+), K(+), fatty acids, hormones, bilirubin and drugs. Its main function is the regulation of the colloidal osmotic pressure of blood. This chain is Albumin A (alb-a), found in Xenopus laevis (African clawed frog).